Here is a 142-residue protein sequence, read N- to C-terminus: Hemoglobin subunit alpha (142 aa).

One can recognise a Globin domain in the interval 2–142 (VLSPADKTNV…VSTVLVSKYR (141 aa)). At S4 the chain carries Phosphoserine. K8 carries the N6-succinyllysine modification. Position 9 is a phosphothreonine (T9). An N6-succinyllysine modification is found at K12. K17 bears the N6-acetyllysine; alternate mark. Position 17 is an N6-succinyllysine; alternate (K17). Position 25 is a phosphotyrosine (Y25). A Phosphoserine modification is found at S36. The residue at position 41 (K41) is an N6-succinyllysine. S50 is subject to Phosphoserine. Position 59 (H59) interacts with O2. H88 contacts heme b. Phosphoserine is present on S103. Position 109 is a phosphothreonine (T109). 2 positions are modified to phosphoserine: S125 and S132. At T135 the chain carries Phosphothreonine. S139 is subject to Phosphoserine.

It belongs to the globin family. In terms of assembly, heterotetramer of two alpha chains and two beta chains. In terms of tissue distribution, red blood cells.

Its function is as follows. Involved in oxygen transport from the lung to the various peripheral tissues. Functionally, hemopressin acts as an antagonist peptide of the cannabinoid receptor CNR1. Hemopressin-binding efficiently blocks cannabinoid receptor CNR1 and subsequent signaling. This Antrozous pallidus (Pallid bat) protein is Hemoglobin subunit alpha (HBA).